A 183-amino-acid polypeptide reads, in one-letter code: Dual-action ribosomal maturation protein DarP (183 aa).

Residues 1-23 (MTKQPDDWLDEVPDNENDDDDDE) form a disordered region. Residues 7–23 (DWLDEVPDNENDDDDDE) show a composition bias toward acidic residues.

The protein belongs to the DarP family.

Its subcellular location is the cytoplasm. In terms of biological role, member of a network of 50S ribosomal subunit biogenesis factors which assembles along the 30S-50S interface, preventing incorrect 23S rRNA structures from forming. Promotes peptidyl transferase center (PTC) maturation. The polypeptide is Dual-action ribosomal maturation protein DarP (Cronobacter sakazakii (strain ATCC BAA-894) (Enterobacter sakazakii)).